The following is a 260-amino-acid chain: Adenosylcobinamide-GDP ribazoletransferase (260 aa).

A run of 6 helical transmembrane segments spans residues 40–60 (AFPFAGIVIGFIPALALLLLL), 64–84 (ADPLMAALIALSIQVLVTGAL), 117–137 (YGAIALILSLAIRAAALAVIA), 142–162 (PLTAALAIPAVAALSRGAIAW), 188–208 (QFALASAGLVAALLIWPAFGL), and 209–229 (RPLVASLLATGIAGFAFTAFI).

Belongs to the CobS family. Mg(2+) serves as cofactor.

It is found in the cell inner membrane. The catalysed reaction is alpha-ribazole + adenosylcob(III)inamide-GDP = adenosylcob(III)alamin + GMP + H(+). It carries out the reaction alpha-ribazole 5'-phosphate + adenosylcob(III)inamide-GDP = adenosylcob(III)alamin 5'-phosphate + GMP + H(+). It participates in cofactor biosynthesis; adenosylcobalamin biosynthesis; adenosylcobalamin from cob(II)yrinate a,c-diamide: step 7/7. Its function is as follows. Joins adenosylcobinamide-GDP and alpha-ribazole to generate adenosylcobalamin (Ado-cobalamin). Also synthesizes adenosylcobalamin 5'-phosphate from adenosylcobinamide-GDP and alpha-ribazole 5'-phosphate. The sequence is that of Adenosylcobinamide-GDP ribazoletransferase from Rhizobium johnstonii (strain DSM 114642 / LMG 32736 / 3841) (Rhizobium leguminosarum bv. viciae).